A 275-amino-acid chain; its full sequence is NH(3)-dependent NAD(+) synthetase (275 aa).

50-57 (GISGGVDS) provides a ligand contact to ATP. D56 is a Mg(2+) binding site. Residue R147 coordinates deamido-NAD(+). T167 is a binding site for ATP. Position 172 (E172) interacts with Mg(2+). The deamido-NAD(+) site is built by K180 and D187. Residues K196 and T218 each contribute to the ATP site. 267–268 (HK) contacts deamido-NAD(+).

This sequence belongs to the NAD synthetase family. In terms of assembly, homodimer.

The enzyme catalyses deamido-NAD(+) + NH4(+) + ATP = AMP + diphosphate + NAD(+) + H(+). It participates in cofactor biosynthesis; NAD(+) biosynthesis; NAD(+) from deamido-NAD(+) (ammonia route): step 1/1. In terms of biological role, catalyzes the ATP-dependent amidation of deamido-NAD to form NAD. Uses ammonia as a nitrogen source. The chain is NH(3)-dependent NAD(+) synthetase from Pseudomonas savastanoi pv. phaseolicola (strain 1448A / Race 6) (Pseudomonas syringae pv. phaseolicola (strain 1448A / Race 6)).